The sequence spans 120 residues: Large ribosomal subunit protein uL18 (120 aa).

Positions 1–26 (MSKAKVTNARRKRSVRLKLRRSGGGR) are disordered. The span at 8–23 (NARRKRSVRLKLRRSG) shows a compositional bias: basic residues.

It belongs to the universal ribosomal protein uL18 family. In terms of assembly, part of the 50S ribosomal subunit; part of the 5S rRNA/L5/L18/L25 subcomplex. Contacts the 5S and 23S rRNAs.

This is one of the proteins that bind and probably mediate the attachment of the 5S RNA into the large ribosomal subunit, where it forms part of the central protuberance. The polypeptide is Large ribosomal subunit protein uL18 (Bradyrhizobium diazoefficiens (strain JCM 10833 / BCRC 13528 / IAM 13628 / NBRC 14792 / USDA 110)).